The following is a 509-amino-acid chain: Butyrophilin-like protein 1 (509 aa).

An N-terminal signal peptide occupies residues 1 to 27 (MMKGSPSVPPAGCLLPLLLLLFTGVSG). Ig-like V-type domains are found at residues 28–139 (EVSW…QEVS) and 151–237 (PLVH…KAIL). The Extracellular portion of the chain corresponds to 28-250 (EVSWFSVKGP…PFFPKTCPWK (223 aa)). 2 cysteine pairs are disulfide-bonded: Cys-53–Cys-127 and Cys-167–Cys-221. Residues 251-271 (VALVCSVLILLVLLGGISLGI) form a helical membrane-spanning segment. Residues 272–509 (WKEHQVKRRE…SMGLSATAQP (238 aa)) are Cytoplasmic-facing. In terms of domain architecture, B30.2/SPRY spans 316–509 (RKALYKEDWK…SMGLSATAQP (194 aa)). Residues 349 to 372 (MPDQDKTDSRTEENRGEETVSSSQ) are disordered. The segment covering 351-366 (DQDKTDSRTEENRGEE) has biased composition (basic and acidic residues).

Belongs to the immunoglobulin superfamily. BTN/MOG family.

The protein localises to the membrane. The chain is Butyrophilin-like protein 1 (Btnl1) from Mus musculus (Mouse).